Here is a 260-residue protein sequence, read N- to C-terminus: Proteasome subunit alpha 1 (260 aa).

The interval 237 to 260 (AEADLLDTGEDADDEAEDEDATEE) is disordered. Over residues 240-260 (DLLDTGEDADDEAEDEDATEE) the composition is skewed to acidic residues.

Belongs to the peptidase T1A family. In terms of assembly, the 20S proteasome core is composed of 14 alpha and 14 beta subunits that assemble into four stacked heptameric rings, resulting in a barrel-shaped structure. The two inner rings, each composed of seven catalytic beta subunits, are sandwiched by two outer rings, each composed of seven alpha subunits. The catalytic chamber with the active sites is on the inside of the barrel. Has a gated structure, the ends of the cylinder being occluded by the N-termini of the alpha-subunits. Is capped at one or both ends by the proteasome regulatory ATPase, PAN.

It is found in the cytoplasm. With respect to regulation, the formation of the proteasomal ATPase PAN-20S proteasome complex, via the docking of the C-termini of PAN into the intersubunit pockets in the alpha-rings, triggers opening of the gate for substrate entry. Interconversion between the open-gate and close-gate conformations leads to a dynamic regulation of the 20S proteasome proteolysis activity. In terms of biological role, component of the proteasome core, a large protease complex with broad specificity involved in protein degradation. The sequence is that of Proteasome subunit alpha 1 from Haloarcula marismortui (strain ATCC 43049 / DSM 3752 / JCM 8966 / VKM B-1809) (Halobacterium marismortui).